The sequence spans 451 residues: Enolase (451 aa).

Gln-167 serves as a coordination point for (2R)-2-phosphoglycerate. Glu-209 functions as the Proton donor in the catalytic mechanism. Residues Asp-250, Glu-307, and Asp-334 each contribute to the Mg(2+) site. 4 residues coordinate (2R)-2-phosphoglycerate: Lys-359, Arg-388, Ser-389, and Lys-410. Lys-359 acts as the Proton acceptor in catalysis.

The protein belongs to the enolase family. It depends on Mg(2+) as a cofactor.

It is found in the cytoplasm. It localises to the secreted. The protein localises to the cell surface. It catalyses the reaction (2R)-2-phosphoglycerate = phosphoenolpyruvate + H2O. Its pathway is carbohydrate degradation; glycolysis; pyruvate from D-glyceraldehyde 3-phosphate: step 4/5. In terms of biological role, catalyzes the reversible conversion of 2-phosphoglycerate (2-PG) into phosphoenolpyruvate (PEP). It is essential for the degradation of carbohydrates via glycolysis. This is Enolase from Mesomycoplasma hyopneumoniae (strain J / ATCC 25934 / NCTC 10110) (Mycoplasma hyopneumoniae).